The sequence spans 287 residues: Small ribosomal subunit protein uS10m (287 aa).

The N-terminal 33 residues, 1–33 (MSLFSPHRILLRTGSAFQLATATRALLSTSSQL), are a transit peptide targeting the mitochondrion. Positions 33-43 (LRNTKNAQSGL) are enriched in polar residues. Residues 33-84 (LRNTKNAQSGLAEQARAEEPVASSPSQTTRPEQKSLEEETTKQTQTHADSTV) form a disordered region. Residues 63–73 (PEQKSLEEETT) are compositionally biased toward basic and acidic residues. Positions 74-84 (KQTQTHADSTV) are enriched in polar residues.

The protein belongs to the universal ribosomal protein uS10 family. Part of the mitochondrial small ribosomal subunit.

It localises to the mitochondrion. Its function is as follows. Involved in mitochondrial genome encoded proteins translation. Involved in the binding of tRNA to the ribosomes. In Emericella nidulans (strain FGSC A4 / ATCC 38163 / CBS 112.46 / NRRL 194 / M139) (Aspergillus nidulans), this protein is Small ribosomal subunit protein uS10m (rsm10).